A 297-amino-acid chain; its full sequence is Acetylglutamate kinase (297 aa).

Substrate contacts are provided by residues 64-65 (GG), Arg-86, and Asn-190.

It belongs to the acetylglutamate kinase family. ArgB subfamily.

It localises to the cytoplasm. It catalyses the reaction N-acetyl-L-glutamate + ATP = N-acetyl-L-glutamyl 5-phosphate + ADP. The protein operates within amino-acid biosynthesis; L-arginine biosynthesis; N(2)-acetyl-L-ornithine from L-glutamate: step 2/4. Functionally, catalyzes the ATP-dependent phosphorylation of N-acetyl-L-glutamate. The chain is Acetylglutamate kinase from Solidesulfovibrio magneticus (strain ATCC 700980 / DSM 13731 / RS-1) (Desulfovibrio magneticus).